The following is a 142-amino-acid chain: Large ribosomal subunit protein uL13 (142 aa).

This sequence belongs to the universal ribosomal protein uL13 family. As to quaternary structure, part of the 50S ribosomal subunit.

Its function is as follows. This protein is one of the early assembly proteins of the 50S ribosomal subunit, although it is not seen to bind rRNA by itself. It is important during the early stages of 50S assembly. This Pseudomonas aeruginosa (strain LESB58) protein is Large ribosomal subunit protein uL13.